The following is a 197-amino-acid chain: Recombination protein RecR (197 aa).

The C4-type zinc-finger motif lies at 57 to 72 (CSVCFAITEDDPCWIC). In terms of domain architecture, Toprim spans 79 to 174 (GTICVVEEPQ…KVTRLAHGIP (96 aa)).

The protein belongs to the RecR family.

May play a role in DNA repair. It seems to be involved in an RecBC-independent recombinational process of DNA repair. It may act with RecF and RecO. The chain is Recombination protein RecR from Geobacter sp. (strain M21).